Reading from the N-terminus, the 126-residue chain is Fluoride-specific ion channel FluC (126 aa).

4 helical membrane passes run 4–24 (LLLV…TSAW), 36–56 (GTLL…TASL), 67–85 (LFLA…SFNY), and 101–121 (AYLL…TLLV). Glycine 75 and threonine 78 together coordinate Na(+).

It belongs to the fluoride channel Fluc/FEX (TC 1.A.43) family.

It localises to the cell inner membrane. The enzyme catalyses fluoride(in) = fluoride(out). Its activity is regulated as follows. Na(+) is not transported, but it plays an essential structural role and its presence is essential for fluoride channel function. Fluoride-specific ion channel. Important for reducing fluoride concentration in the cell, thus reducing its toxicity. In Anaeromyxobacter sp. (strain K), this protein is Fluoride-specific ion channel FluC.